An 859-amino-acid polypeptide reads, in one-letter code: Leucine--tRNA ligase (859 aa).

A 'HIGH' region motif is present at residues 42-52 (PYPSGRLHMGH). Residues 618–622 (KMSKS) carry the 'KMSKS' region motif. Lys621 contributes to the ATP binding site.

The protein belongs to the class-I aminoacyl-tRNA synthetase family.

The protein localises to the cytoplasm. It catalyses the reaction tRNA(Leu) + L-leucine + ATP = L-leucyl-tRNA(Leu) + AMP + diphosphate. This chain is Leucine--tRNA ligase, found in Shewanella sp. (strain ANA-3).